We begin with the raw amino-acid sequence, 233 residues long: Cilia- and flagella-associated protein 299 (233 aa).

The protein localises to the cytoplasm. It is found in the nucleus. May be involved in spermatogenesis. In Xenopus laevis (African clawed frog), this protein is Cilia- and flagella-associated protein 299.